We begin with the raw amino-acid sequence, 313 residues long: Olfactory receptor 10Z1 (313 aa).

At Met1 to Leu25 the chain is on the extracellular side. Residue Asn5 is glycosylated (N-linked (GlcNAc...) asparagine). Residues Leu26–Ile46 form a helical membrane-spanning segment. The Cytoplasmic segment spans residues Ile47–His54. A helical membrane pass occupies residues Leu55–Leu75. The Extracellular portion of the chain corresponds to Gly76–Ala99. The cysteines at positions 97 and 189 are disulfide-linked. A helical membrane pass occupies residues Gln100–Phe120. The Cytoplasmic portion of the chain corresponds to Asp121 to Thr139. Residues Leu140–Thr160 traverse the membrane as a helical segment. The Extracellular portion of the chain corresponds to Leu161 to Leu197. The chain crosses the membrane as a helical span at residues Arg198–Ser217. The Cytoplasmic portion of the chain corresponds to Tyr218–Ala237. Residues Phe238 to Val258 form a helical membrane-spanning segment. Over Tyr259–Asp271 the chain is Extracellular. A helical transmembrane segment spans residues Gln272–Leu292. Topologically, residues Arg293–Gly313 are cytoplasmic.

This sequence belongs to the G-protein coupled receptor 1 family.

The protein resides in the cell membrane. In terms of biological role, odorant receptor. This chain is Olfactory receptor 10Z1 (OR10Z1), found in Homo sapiens (Human).